A 713-amino-acid chain; its full sequence is Putative ERAD-associated E3 ubiquitin-protein ligase component (713 aa).

A signal peptide spans 1-20; the sequence is MQLLNFLICLFFIFKRCVFT. Asn-48 and Asn-123 each carry an N-linked (GlcNAc...) asparagine glycan. Sel1-like repeat units follow at residues 83–124 and 125–160; these read PESQ…TQNY and TYAL…HQIS. Asn-211 carries N-linked (GlcNAc...) asparagine glycosylation. Sel1-like repeat units lie at residues 212 to 248, 280 to 315, 490 to 525, and 527 to 562; these read ISAH…RLVN, SIAA…SLNH, IHSL…AIHP, and ALAY…MHDT. N-linked (GlcNAc...) asparagine glycosylation occurs at Asn-314. The interval 621–655 is disordered; it reads QLPPEPPTLQVDRTPQQPDPQETSESLPSPNTEEM. A compositionally biased stretch (polar residues) spans 631 to 652; sequence VDRTPQQPDPQETSESLPSPNT. A helical transmembrane segment spans residues 671–691; sequence GRFLETACVTLIVVVVGLVLM.

Belongs to the sel-1 family.

The protein resides in the endoplasmic reticulum membrane. Component of the endoplasmic reticulum quality control (ERQC) system involved in ubiquitin-dependent degradation of missfolded endoplasmic reticulum proteins. The chain is Putative ERAD-associated E3 ubiquitin-protein ligase component from Schizosaccharomyces pombe (strain 972 / ATCC 24843) (Fission yeast).